Here is a 1074-residue protein sequence, read N- to C-terminus: Carbamoyl phosphate synthase large chain (1074 aa).

The tract at residues 1 to 399 is carboxyphosphate synthetic domain; sequence MPKRSDIKKV…ALMKAIRSLD (399 aa). Residues arginine 129, arginine 169, glycine 175, glycine 176, glutamate 208, valine 210, glutamate 215, glycine 241, isoleucine 242, histidine 243, glutamine 284, and glutamate 296 each coordinate ATP. An ATP-grasp 1 domain is found at 133–325; the sequence is KKAMERIGEP…IARVTAKIAI (193 aa). Mg(2+)-binding residues include glutamine 284, glutamate 296, and asparagine 298. Residues glutamine 284, glutamate 296, and asparagine 298 each contribute to the Mn(2+) site. Residues 400-543 are oligomerization domain; the sequence is IDIDLGYNGK…YSTYDEECEL (144 aa). Residues 544–933 form a carbamoyl phosphate synthetic domain region; sequence NPSDNKKVLI…FKAEMSAENN (390 aa). The ATP-grasp 2 domain occupies 674-865; sequence NKLLNKLGIP…LAKIAAKVMA (192 aa). ATP contacts are provided by arginine 710, aspartate 749, leucine 751, glutamate 756, glycine 781, isoleucine 782, histidine 783, serine 784, glutamine 824, and glutamate 836. Positions 824, 836, and 838 each coordinate Mg(2+). Mn(2+) is bound by residues glutamine 824, glutamate 836, and asparagine 838. The region spanning 932–1074 is the MGS-like domain; it reads NNLPLDGIVF…YHREVRYRAL (143 aa). The segment at 934–1074 is allosteric domain; sequence LPLDGIVFIS…YHREVRYRAL (141 aa).

It belongs to the CarB family. As to quaternary structure, composed of two chains; the small (or glutamine) chain promotes the hydrolysis of glutamine to ammonia, which is used by the large (or ammonia) chain to synthesize carbamoyl phosphate. Tetramer of heterodimers (alpha,beta)4. The cofactor is Mg(2+). It depends on Mn(2+) as a cofactor.

The catalysed reaction is hydrogencarbonate + L-glutamine + 2 ATP + H2O = carbamoyl phosphate + L-glutamate + 2 ADP + phosphate + 2 H(+). It carries out the reaction hydrogencarbonate + NH4(+) + 2 ATP = carbamoyl phosphate + 2 ADP + phosphate + 2 H(+). The protein operates within amino-acid biosynthesis; L-arginine biosynthesis; carbamoyl phosphate from bicarbonate: step 1/1. Its pathway is pyrimidine metabolism; UMP biosynthesis via de novo pathway; (S)-dihydroorotate from bicarbonate: step 1/3. Its function is as follows. Large subunit of the glutamine-dependent carbamoyl phosphate synthetase (CPSase). CPSase catalyzes the formation of carbamoyl phosphate from the ammonia moiety of glutamine, carbonate, and phosphate donated by ATP, constituting the first step of 2 biosynthetic pathways, one leading to arginine and/or urea and the other to pyrimidine nucleotides. The large subunit (synthetase) binds the substrates ammonia (free or transferred from glutamine from the small subunit), hydrogencarbonate and ATP and carries out an ATP-coupled ligase reaction, activating hydrogencarbonate by forming carboxy phosphate which reacts with ammonia to form carbamoyl phosphate. The protein is Carbamoyl phosphate synthase large chain of Methanothrix thermoacetophila (strain DSM 6194 / JCM 14653 / NBRC 101360 / PT) (Methanosaeta thermophila).